We begin with the raw amino-acid sequence, 311 residues long: Long form salivary protein D7L1 (311 aa).

A signal peptide spans Met1–Ala21. Cystine bridges form between Cys37–Cys73, Cys69–Cys128, Cys178–Cys211, and Cys252–Cys263.

It belongs to the PBP/GOBP family.

It localises to the secreted. Modulates blood feeding of female mosquitoes on vertebrate species by binding and sequestering different mediators involved in the host response. Binds leukotriene C4 and U-46619, a stable analog of thromboxane A2. Inhibits agonist-induced platelet aggregation. Exhibits vasodilating activity. The chain is Long form salivary protein D7L1 from Anopheles gambiae (African malaria mosquito).